The following is a 339-amino-acid chain: Retroviral-like aspartic protease 1 (339 aa).

A propeptide spanning residues 1–188 is cleaved from the precursor; sequence MRNPGGPGWA…SEPEEILFAN (188 aa). The interval 34 to 53 is disordered; it reads VPAPFNSSRQGKNTAQPTEP. Polar residues predominate over residues 38–53; that stretch reads FNSSRQGKNTAQPTEP. Asparagine 39 carries N-linked (GlcNAc...) asparagine glycosylation. The chain crosses the membrane as a helical span at residues 55 to 75; it reads LSSVIAPTLFCAFLYLACVTA. The Peptidase A2 domain occupies 205-286; the sequence is VRFLVDSGAQ…AEEAIIGTDV (82 aa). Aspartate 210 is a catalytic residue. Residue asparagine 274 is glycosylated (N-linked (GlcNAc...) asparagine). Residues 325-339 constitute a propeptide that is removed on maturation; it reads LIEEEEGSSAPEGSH.

As to quaternary structure, homodimer. In terms of processing, undergoes autocleavage which is necessary for activation of the protein. Highly expressed in stratified epithelia in skin, tongue, esophagus, forestomach and vagina. Also expressed in trachea, urinary bladder and thymus. Undetectable in simple epithelia. Within the epidermis, expressed exclusively in the granular layer (at protein level). Levels are elevated in benign skin tumors but are down-regulated in squamous cell carcinomas.

Its subcellular location is the membrane. Its function is as follows. Protease responsible for filaggrin processing, essential for the maintenance of a proper epidermis organization. The chain is Retroviral-like aspartic protease 1 from Mus musculus (Mouse).